Here is a 416-residue protein sequence, read N- to C-terminus: ATP-dependent Clp protease ATP-binding subunit ClpX (416 aa).

One can recognise a ClpX-type ZB domain in the interval 1–54; that stretch reads MFKFGDEKGQLKCSFCGKSQEQVRKLVAGPGVYICDECIELCNEIIEEELNDDV. Zn(2+) is bound by residues C13, C16, C35, and C38. ATP is bound at residue 117-124; the sequence is PTGCGKTL.

This sequence belongs to the ClpX chaperone family. As to quaternary structure, component of the ClpX-ClpP complex. Forms a hexameric ring that, in the presence of ATP, binds to fourteen ClpP subunits assembled into a disk-like structure with a central cavity, resembling the structure of eukaryotic proteasomes.

Its function is as follows. ATP-dependent specificity component of the Clp protease. It directs the protease to specific substrates. Can perform chaperone functions in the absence of ClpP. This is ATP-dependent Clp protease ATP-binding subunit ClpX from Halothermothrix orenii (strain H 168 / OCM 544 / DSM 9562).